We begin with the raw amino-acid sequence, 345 residues long: Phenylalanine--tRNA ligase alpha subunit (345 aa).

Glutamate 266 serves as a coordination point for Mg(2+).

The protein belongs to the class-II aminoacyl-tRNA synthetase family. Phe-tRNA synthetase alpha subunit type 1 subfamily. As to quaternary structure, tetramer of two alpha and two beta subunits. It depends on Mg(2+) as a cofactor.

The protein localises to the cytoplasm. The catalysed reaction is tRNA(Phe) + L-phenylalanine + ATP = L-phenylalanyl-tRNA(Phe) + AMP + diphosphate + H(+). The protein is Phenylalanine--tRNA ligase alpha subunit of Burkholderia lata (strain ATCC 17760 / DSM 23089 / LMG 22485 / NCIMB 9086 / R18194 / 383).